We begin with the raw amino-acid sequence, 284 residues long: MTSGTRTPTWKERENNKRRERRRRAIAAKIFAGLRIHGNFKLPKHCDNNEVLKALCNEAGWTVEDDGTTYRKGCKPMDRMDLMNGSTSASPCSSYQHSPRASYNPSPSSSSFPSPTNPFGDANSLIPWLKNLSSNSPSKLPFFHGNSISAPVTPPLARSPTRDQVTIPDSGWLSGMQTPQSGPSSPTFSLVSRNPFFDKEAFKMGDCNSPMWTPGQSGNCSPAIPAGVDQNSDVPMADGMTAEFAFGCNAMAANGMVKPWEGERIHGECVSDDLELTLGNSRTR.

Disordered stretches follow at residues 1-21 (MTSG…RRER) and 85-116 (GSTS…PSPT). A required for DNA-binding region spans residues 6 to 88 (RTPTWKEREN…RMDLMNGSTS (83 aa)). Residues 85 to 97 (GSTSASPCSSYQH) show a composition bias toward polar residues. The span at 98-114 (SPRASYNPSPSSSSFPS) shows a compositional bias: low complexity. Thr-153 is subject to Phosphothreonine.

This sequence belongs to the BZR/LAT61 family. In terms of processing, phosphorylated. Phosphorylation increases protein degradation.

This is BES1/BZR1 homolog protein 3 (BEH3) from Arabidopsis thaliana (Mouse-ear cress).